The primary structure comprises 161 residues: V-type proton ATPase subunit c (161 aa).

Over 1–9 (MSTDLCPVY) the chain is Lumenal. A helical transmembrane segment spans residues 10–32 (APFFGVMGCTAAIVFASFGAAYG). Over 33 to 54 (TAKAGVGISAMGVLRPDLIVKN) the chain is Cytoplasmic. The chain crosses the membrane as a helical span at residues 55–75 (TIPVVMAGIIAIYGLVVSVLI). Over 76 to 91 (SGNLKQILSLYSGFIQ) the chain is Lumenal. A helical membrane pass occupies residues 92-113 (LGAGLSVGLAGLAAGFAIGIVG). Over 114–125 (DAGVRGTAQQPR) the chain is Cytoplasmic. A helical membrane pass occupies residues 126–151 (LFVAMILILIFAEVLGLYGLIVALLL). Over 152–161 (NTRATDNVTC) the chain is Lumenal.

This sequence belongs to the V-ATPase proteolipid subunit family. In terms of assembly, V-ATPase is a heteromultimeric enzyme composed of a peripheral catalytic V1 complex (components A to H) attached to an integral membrane V0 proton pore complex (components: a, c, c', c'', d, e, f and VOA1). The decameric c-ring forms the proton-conducting pore, and is composed of eight proteolipid subunits c, one subunit c' and one subunit c''.

Its subcellular location is the vacuole membrane. Its function is as follows. Proton-conducting pore forming subunit of the V0 complex of vacuolar(H+)-ATPase (V-ATPase), a multisubunit enzyme composed of a peripheral complex (V1) that hydrolyzes ATP and a membrane integral complex (V0) that translocates protons. V-ATPase is responsible for acidifying and maintaining the pH of intracellular compartments. This chain is V-type proton ATPase subunit c, found in Schizosaccharomyces pombe (strain 972 / ATCC 24843) (Fission yeast).